We begin with the raw amino-acid sequence, 361 residues long: Glyceraldehyde-3-phosphate dehydrogenase, glycosomal (361 aa).

NAD(+) contacts are provided by residues 13 to 14 (RI), aspartate 39, glutamine 92, and serine 135. D-glyceraldehyde 3-phosphate-binding positions include 166–168 (SCT), threonine 198, 227–228 (TG), and arginine 250. Cysteine 167 functions as the Nucleophile in the catalytic mechanism. Residue asparagine 336 participates in NAD(+) binding. Residues 359–361 (SKM) carry the Microbody targeting signal motif.

The protein belongs to the glyceraldehyde-3-phosphate dehydrogenase family. In terms of assembly, homotetramer.

The protein localises to the glycosome. It carries out the reaction D-glyceraldehyde 3-phosphate + phosphate + NAD(+) = (2R)-3-phospho-glyceroyl phosphate + NADH + H(+). Its pathway is carbohydrate degradation; glycolysis; pyruvate from D-glyceraldehyde 3-phosphate: step 1/5. The protein is Glyceraldehyde-3-phosphate dehydrogenase, glycosomal (GAPG) of Leishmania mexicana.